We begin with the raw amino-acid sequence, 201 residues long: Small ribosomal subunit protein uS4c (201 aa).

One can recognise an S4 RNA-binding domain in the interval M91 to I151.

The protein belongs to the universal ribosomal protein uS4 family. As to quaternary structure, part of the 30S ribosomal subunit. Contacts protein S5. The interaction surface between S4 and S5 is involved in control of translational fidelity.

It is found in the plastid. Its subcellular location is the chloroplast. In terms of biological role, one of the primary rRNA binding proteins, it binds directly to 16S rRNA where it nucleates assembly of the body of the 30S subunit. With S5 and S12 plays an important role in translational accuracy. This Welwitschia mirabilis (Tree tumbo) protein is Small ribosomal subunit protein uS4c (rps4).